The primary structure comprises 210 residues: Urease accessory protein UreF (210 aa).

Belongs to the UreF family. UreD, UreF and UreG form a complex that acts as a GTP-hydrolysis-dependent molecular chaperone, activating the urease apoprotein by helping to assemble the nickel containing metallocenter of UreC. The UreE protein probably delivers the nickel.

The protein resides in the cytoplasm. Functionally, required for maturation of urease via the functional incorporation of the urease nickel metallocenter. The chain is Urease accessory protein UreF from Cereibacter sphaeroides (strain ATCC 17029 / ATH 2.4.9) (Rhodobacter sphaeroides).